Reading from the N-terminus, the 274-residue chain is MAALDGLPPLRDVIQRHGLDAKKALGQNFLLDLNLTQKIARTAGPLEGVTVIEVGPGPGGLTRAILALGAKKVVAIERDSRCLPALAEIGAHYPERLDVVEGDALKVDFEALADGPVRIIANLPYNVGTQLLVNWLLPGRWPPFWQSMTLMFQREVGLRIVASPDDDHYGRLGVLCGWRTKASLAFDVPPQAFTPPPKVTSTVVHLEPIEVPIPCSPAVLEKVTQAAFGQRRKMLRQSLKPLGGEALLAKAGIDPKRRAETLSVEEFCRLANCL.

6 residues coordinate S-adenosyl-L-methionine: asparagine 28, leucine 30, glycine 55, glutamate 77, aspartate 103, and asparagine 122.

This sequence belongs to the class I-like SAM-binding methyltransferase superfamily. rRNA adenine N(6)-methyltransferase family. RsmA subfamily.

The protein resides in the cytoplasm. It catalyses the reaction adenosine(1518)/adenosine(1519) in 16S rRNA + 4 S-adenosyl-L-methionine = N(6)-dimethyladenosine(1518)/N(6)-dimethyladenosine(1519) in 16S rRNA + 4 S-adenosyl-L-homocysteine + 4 H(+). Specifically dimethylates two adjacent adenosines (A1518 and A1519) in the loop of a conserved hairpin near the 3'-end of 16S rRNA in the 30S particle. May play a critical role in biogenesis of 30S subunits. This Sinorhizobium medicae (strain WSM419) (Ensifer medicae) protein is Ribosomal RNA small subunit methyltransferase A.